We begin with the raw amino-acid sequence, 197 residues long: Holliday junction branch migration complex subunit RuvA (197 aa).

Residues 1-64 (MYEYIKGKYI…EDFIGVYGFL (64 aa)) form a domain I region. The tract at residues 65-143 (TKDELSMFKL…IDILEEDDEQ (79 aa)) is domain II. Residues 144–148 (TINKV) form a flexible linker region. The domain III stretch occupies residues 149–197 (TDDKKVLEAVAALITLGYSEKEANKVINSCDKNNSLEQIIKEALKYLMK).

This sequence belongs to the RuvA family. In terms of assembly, homotetramer. Forms an RuvA(8)-RuvB(12)-Holliday junction (HJ) complex. HJ DNA is sandwiched between 2 RuvA tetramers; dsDNA enters through RuvA and exits via RuvB. An RuvB hexamer assembles on each DNA strand where it exits the tetramer. Each RuvB hexamer is contacted by two RuvA subunits (via domain III) on 2 adjacent RuvB subunits; this complex drives branch migration. In the full resolvosome a probable DNA-RuvA(4)-RuvB(12)-RuvC(2) complex forms which resolves the HJ.

The protein localises to the cytoplasm. Its function is as follows. The RuvA-RuvB-RuvC complex processes Holliday junction (HJ) DNA during genetic recombination and DNA repair, while the RuvA-RuvB complex plays an important role in the rescue of blocked DNA replication forks via replication fork reversal (RFR). RuvA specifically binds to HJ cruciform DNA, conferring on it an open structure. The RuvB hexamer acts as an ATP-dependent pump, pulling dsDNA into and through the RuvAB complex. HJ branch migration allows RuvC to scan DNA until it finds its consensus sequence, where it cleaves and resolves the cruciform DNA. In Clostridium botulinum (strain 657 / Type Ba4), this protein is Holliday junction branch migration complex subunit RuvA.